The primary structure comprises 197 residues: Phosphoheptose isomerase (197 aa).

Positions 34–196 (MVNCLLGGNK…DRTLFPQDEQ (163 aa)) constitute an SIS domain. 49–51 (NGG) serves as a coordination point for substrate. Zn(2+) is bound by residues His58 and Glu62. Residues Glu62, 91-92 (ND), 117-119 (STS), Ser122, and Gln172 each bind substrate. Gln172 and His180 together coordinate Zn(2+).

Belongs to the SIS family. GmhA subfamily. Homotetramer. Requires Zn(2+) as cofactor.

The protein localises to the cytoplasm. The catalysed reaction is 2 D-sedoheptulose 7-phosphate = D-glycero-alpha-D-manno-heptose 7-phosphate + D-glycero-beta-D-manno-heptose 7-phosphate. It participates in carbohydrate biosynthesis; D-glycero-D-manno-heptose 7-phosphate biosynthesis; D-glycero-alpha-D-manno-heptose 7-phosphate and D-glycero-beta-D-manno-heptose 7-phosphate from sedoheptulose 7-phosphate: step 1/1. In terms of biological role, catalyzes the isomerization of sedoheptulose 7-phosphate in D-glycero-D-manno-heptose 7-phosphate. This Shewanella pealeana (strain ATCC 700345 / ANG-SQ1) protein is Phosphoheptose isomerase.